Consider the following 1824-residue polypeptide: Afadin (1824 aa).

A Ras-associating 1 domain is found at 39–133 (FHGVMRFYFQ…GRFVLKNEND (95 aa)). A disordered region spans residues 128 to 194 (LKNENDAIPP…DRPFQGEDVE (67 aa)). The stretch at 146 to 185 (EKQEKEGVIQNFKRTLSKKEKKEKKKREKEALRQASDKDD) forms a coiled coil. Residues 160 to 172 (TLSKKEKKEKKKR) are compositionally biased toward basic residues. Positions 173–189 (EKEALRQASDKDDRPFQ) are enriched in basic and acidic residues. A phosphoserine mark is found at Ser216, Ser246, and Ser256. The Ras-associating 2 domain maps to 246–348 (SGGTLRIYAD…LVFQLKRRPP (103 aa)). Basic and acidic residues predominate over residues 349–371 (DHIPKKTKKHLEGKTPKGKERAD). The tract at residues 349 to 378 (DHIPKKTKKHLEGKTPKGKERADGSGYGST) is disordered. Phosphoserine occurs at positions 391 and 424. One can recognise an FHA domain in the interval 426 to 492 (TEVGTEKLDD…LQSGMKVQFG (67 aa)). Phosphoserine is present on residues Ser512, Ser557, Ser562, Ser589, and Ser655. Residues 534–595 (FDLGGDIHSG…RQESRTQDAS (62 aa)) are disordered. Basic and acidic residues predominate over residues 580–591 (QQPDYRRQESRT). The Dilute domain maps to 668 to 908 (NKMVSMMEGV…IENVVTVAEN (241 aa)). The PDZ domain maps to 1007–1093 (IITVTLKKQN…VVTLEVAKQG (87 aa)). A phosphoserine mark is found at Ser1083, Ser1107, Ser1126, Ser1140, Ser1143, Ser1172, Ser1173, Ser1182, and Ser1199. The disordered stretch occupies residues 1107–1223 (SPMMQRISDR…PRPEAYPIPT (117 aa)). Residues 1113-1128 (ISDRRGSGKPRPKSEG) show a composition bias toward basic and acidic residues. A compositionally biased stretch (polar residues) spans 1132–1143 (YNNSTQNGSPES). Residues 1152 to 1172 (SEPKKLPGDDRLMKNRADHRS) show a composition bias toward basic and acidic residues. Polar residues predominate over residues 1190-1210 (ASGTTAKITSVSTGNLCTEEQ). Phosphothreonine occurs at positions 1211 and 1232. 3 disordered regions span residues 1235–1473 (ASKS…LQRP), 1501–1528 (SKEE…EKQQ), and 1569–1824 (RLQE…LNTK). Ser1238 bears the Phosphoserine mark. Composition is skewed to basic and acidic residues over residues 1252–1262 (YEEKPHMHTDS) and 1274–1302 (RSQE…KSDS). Ser1275 carries the post-translational modification Phosphoserine. Positions 1309–1318 (SSSLDSSTSS) are enriched in low complexity. The segment covering 1325–1337 (SSKSVTPASTLTK) has biased composition (polar residues). Residue Ser1328 is modified to Phosphoserine. Thr1330 is subject to Phosphothreonine. The span at 1345-1356 (TPAAIPATPVAV) shows a compositional bias: low complexity. Pro residues predominate over residues 1364–1373 (LPPPPPPPPV). Basic and acidic residues predominate over residues 1407-1441 (AERRKREEHQRWYEKEKARLEEERERKRREQERKL). Residues 1408 to 1448 (ERRKREEHQRWYEKEKARLEEERERKRREQERKLGQMRTQS) adopt a coiled-coil conformation. Ser1501 and Ser1512 each carry phosphoserine. Positions 1515–1528 (PWKRDAKEKLEKQQ) are enriched in basic and acidic residues. Residues 1523-1667 (KLEKQQQMHI…SRLEAERRRQ (145 aa)) adopt a coiled-coil conformation. Positions 1578–1589 (EDDEEEEDDDVD) are enriched in acidic residues. Positions 1597 to 1677 (LEAERRARLQ…HDEAARRLLE (81 aa)) are enriched in basic and acidic residues. Residues 1694 to 1709 (PPSPSPAPGAPPPPPQ) are compositionally biased toward pro residues. Phosphoserine occurs at positions 1696, 1721, 1774, 1779, and 1799. Over residues 1762–1776 (DACRDAKEKRSKSQD) the composition is skewed to basic and acidic residues. Position 1807 is an N6-acetyllysine (Lys1807). A compositionally biased stretch (basic and acidic residues) spans 1813–1824 (KLTELENELNTK).

Homodimer. Interacts with F-actin, nectin and NECTIN3. Essential for the association of nectin and E-cadherin. Isoform 1/s-afadin does not interact with F-actin. Interacts with ZO-1 and occludin, but probably in an indirect manner. Interacts with RIT1 and RIT2. Interacts with NRXN1 and BCR. Interacts with ADAM10; the interaction locks ADAM10 at adherens junctions following ADAM10 recruitment to adherens junctions by TSPAN33.

It is found in the cell junction. Its subcellular location is the adherens junction. Its function is as follows. Belongs to an adhesion system, probably together with the E-cadherin-catenin system, which plays a role in the organization of homotypic, interneuronal and heterotypic cell-cell adherens junctions (AJs). Nectin- and actin-filament-binding protein that connects nectin to the actin cytoskeleton. May play a key role in the organization of epithelial structures of the embryonic ectoderm. Essential for the organization of adherens junctions. The polypeptide is Afadin (Homo sapiens (Human)).